A 172-amino-acid polypeptide reads, in one-letter code: Large ribosomal subunit protein uL10 (172 aa).

The protein belongs to the universal ribosomal protein uL10 family. As to quaternary structure, part of the ribosomal stalk of the 50S ribosomal subunit. The N-terminus interacts with L11 and the large rRNA to form the base of the stalk. The C-terminus forms an elongated spine to which L12 dimers bind in a sequential fashion forming a multimeric L10(L12)X complex.

Its function is as follows. Forms part of the ribosomal stalk, playing a central role in the interaction of the ribosome with GTP-bound translation factors. The sequence is that of Large ribosomal subunit protein uL10 from Chlamydia trachomatis serovar A (strain ATCC VR-571B / DSM 19440 / HAR-13).